The chain runs to 390 residues: Transforming growth factor beta-1 proprotein (390 aa).

Residues Met-1 to Gly-29 form the signal peptide. Residues Leu-30–Pro-74 form a straightjacket domain region. The segment at Glu-75–Leu-271 is arm domain. 3 N-linked (GlcNAc...) asparagine glycosylation sites follow: Asn-82, Asn-136, and Asn-176. Positions Asp-226–Asp-252 are bowtie tail. A Cell attachment site motif is present at residues Arg-244 to Asp-246. Disulfide bonds link Cys-285–Cys-294, Cys-293–Cys-356, Cys-322–Cys-387, and Cys-326–Cys-389.

The protein belongs to the TGF-beta family. In terms of assembly, homodimer; disulfide-linked. Interacts with the serine proteases, HTRA1 and HTRA3: the interaction with either inhibits TGFB1-mediated signaling and the HTRA protease activity is required for this inhibition. May interact with THSD4; this interaction may lead to sequestration by FBN1 microfibril assembly and attenuation of TGFB signaling. Interacts with CD109, DPT and ASPN. Interacts with EFEMP2. Interacts with TSKU; the interaction contributes to regulation of the hair cycle. Interacts with TGFBR3. As to quaternary structure, homodimer; disulfide-linked. Interacts with transforming growth factor beta-1 (TGF-beta-1) chain; interaction is non-covalent and maintains TGF-beta-1 in a latent state; each latency-associated peptide (LAP) monomer interacts with TGF-beta-1 in the other monomer. Interacts with LTBP1; leading to regulation of TGF-beta-1 activation. Interacts with LRRC32/GARP; leading to regulation of TGF-beta-1 activation on the surface of activated regulatory T-cells (Tregs). Interacts with LRRC33/NRROS; leading to regulation of TGF-beta-1 activation in macrophages and microglia. Interacts (via cell attachment site) with integrins ITGAV and ITGB6 (ITGAV:ITGB6), leading to release of the active TGF-beta-1. Interacts with NREP; the interaction results in a decrease in TGFB1 autoinduction. Interacts with HSP90AB1; inhibits latent TGFB1 activation. Homodimer; disulfide-linked. Interacts with TGF-beta receptors (TGFBR1 and TGFBR2), leading to signal transduction. Transforming growth factor beta-1 proprotein: The precursor proprotein is cleaved in the Golgi apparatus by FURIN to form Transforming growth factor beta-1 (TGF-beta-1) and Latency-associated peptide (LAP) chains, which remain non-covalently linked, rendering TGF-beta-1 inactive. In terms of processing, N-glycosylated. Deglycosylation leads to activation of Transforming growth factor beta-1 (TGF-beta-1); mechanisms triggering deglycosylation-driven activation of TGF-beta-1 are however unclear. As to expression, abundant in the bone matrix. Expressed in cardiomyocytes.

It localises to the secreted. It is found in the extracellular space. The protein resides in the extracellular matrix. Transforming growth factor beta-1 proprotein: Precursor of the Latency-associated peptide (LAP) and Transforming growth factor beta-1 (TGF-beta-1) chains, which constitute the regulatory and active subunit of TGF-beta-1, respectively. In terms of biological role, required to maintain the Transforming growth factor beta-1 (TGF-beta-1) chain in a latent state during storage in extracellular matrix. Associates non-covalently with TGF-beta-1 and regulates its activation via interaction with 'milieu molecules', such as LTBP1, LRRC32/GARP and LRRC33/NRROS, that control activation of TGF-beta-1. Interaction with LRRC33/NRROS regulates activation of TGF-beta-1 in macrophages and microglia. Interaction with LRRC32/GARP controls activation of TGF-beta-1 on the surface of activated regulatory T-cells (Tregs). Interaction with integrins (ITGAV:ITGB6 or ITGAV:ITGB8) results in distortion of the Latency-associated peptide chain and subsequent release of the active TGF-beta-1. Its function is as follows. Multifunctional protein that regulates the growth and differentiation of various cell types and is involved in various processes, such as normal development, immune function, microglia function and responses to neurodegeneration. Activation into mature form follows different steps: following cleavage of the proprotein in the Golgi apparatus, Latency-associated peptide (LAP) and Transforming growth factor beta-1 (TGF-beta-1) chains remain non-covalently linked rendering TGF-beta-1 inactive during storage in extracellular matrix. At the same time, LAP chain interacts with 'milieu molecules', such as LTBP1, LRRC32/GARP and LRRC33/NRROS that control activation of TGF-beta-1 and maintain it in a latent state during storage in extracellular milieus. TGF-beta-1 is released from LAP by integrins (ITGAV:ITGB6 or ITGAV:ITGB8): integrin-binding to LAP stabilizes an alternative conformation of the LAP bowtie tail and results in distortion of the LAP chain and subsequent release of the active TGF-beta-1. Once activated following release of LAP, TGF-beta-1 acts by binding to TGF-beta receptors (TGFBR1 and TGFBR2), which transduce signal. While expressed by many cells types, TGF-beta-1 only has a very localized range of action within cell environment thanks to fine regulation of its activation by Latency-associated peptide chain (LAP) and 'milieu molecules'. Plays an important role in bone remodeling: acts as a potent stimulator of osteoblastic bone formation, causing chemotaxis, proliferation and differentiation in committed osteoblasts. Can promote either T-helper 17 cells (Th17) or regulatory T-cells (Treg) lineage differentiation in a concentration-dependent manner. At high concentrations, leads to FOXP3-mediated suppression of RORC and down-regulation of IL-17 expression, favoring Treg cell development. At low concentrations in concert with IL-6 and IL-21, leads to expression of the IL-17 and IL-23 receptors, favoring differentiation to Th17 cells. Stimulates sustained production of collagen through the activation of CREB3L1 by regulated intramembrane proteolysis (RIP). Mediates SMAD2/3 activation by inducing its phosphorylation and subsequent translocation to the nucleus. Positively regulates odontoblastic differentiation in dental papilla cells, via promotion of IPO7-mediated translocation of phosphorylated SMAD2 to the nucleus and subsequent transcription of target genes. Can induce epithelial-to-mesenchymal transition (EMT) and cell migration in various cell types. This Rattus norvegicus (Rat) protein is Transforming growth factor beta-1 proprotein (Tgfb1).